The sequence spans 361 residues: MRVLVAMSGGVDSSVAAARAVEAGHDVIGVHLALHKDAQQTREKARGCCSLEDSADARRICDKLGIPFYVWDFSEEFKEAVIGDFVDSYARGETPNPCLRCNEKIKFAALLRKGMALGFDAVATGHYATIDSDGYMRRSLDENKDQSYVLGVITKEELDHCFFPIGDTPKPQIREEAKRHGFSTAAKPDSYDICFIPDGNTQAFLGRSIGLRPGMIVDTEGNELKEHDGAWNYTIGQRKGLDIKTPTADGSPRYVTDIDAATGTVTVGSRADLAVTHIEADRLKYLHPAMEGDFDCEVQVRAHGSVVPCHAHVDREADRMTLELNEPLSGVARGQAAVLYLPSPDELGDIVLGSGTICGTE.

Residues 6–13 (AMSGGVDS) and L32 contribute to the ATP site. C101 acts as the Nucleophile in catalysis. C101 and C194 are oxidised to a cystine. G125 lines the ATP pocket. Positions 144-146 (KDQ) are interaction with tRNA. C194 serves as the catalytic Cysteine persulfide intermediate.

Belongs to the MnmA/TRMU family.

Its subcellular location is the cytoplasm. The catalysed reaction is S-sulfanyl-L-cysteinyl-[protein] + uridine(34) in tRNA + AH2 + ATP = 2-thiouridine(34) in tRNA + L-cysteinyl-[protein] + A + AMP + diphosphate + H(+). Catalyzes the 2-thiolation of uridine at the wobble position (U34) of tRNA, leading to the formation of s(2)U34. The sequence is that of tRNA-specific 2-thiouridylase MnmA from Corynebacterium aurimucosum (strain ATCC 700975 / DSM 44827 / CIP 107346 / CN-1) (Corynebacterium nigricans).